We begin with the raw amino-acid sequence, 159 residues long: Regulatory protein RecX (159 aa).

The protein belongs to the RecX family.

It is found in the cytoplasm. In terms of biological role, modulates RecA activity. This chain is Regulatory protein RecX, found in Acinetobacter baylyi (strain ATCC 33305 / BD413 / ADP1).